The sequence spans 330 residues: Ketol-acid reductoisomerase (NADP(+)) (330 aa).

The region spanning 1-181 is the KARI N-terminal Rossmann domain; sequence MNVYYEQDAD…GGTKAGVIET (181 aa). Residues 24–27, R47, S50, S52, and 82–85 each bind NADP(+); these read YGSQ and DQNQ. H107 is an active-site residue. G133 provides a ligand contact to NADP(+). Residues 182-327 enclose the KARI C-terminal knotted domain; the sequence is SIKNETETDL…AKLRDMMSWL (146 aa). 4 residues coordinate Mg(2+): D190, E194, E226, and E230. S251 serves as a coordination point for substrate.

The protein belongs to the ketol-acid reductoisomerase family. Requires Mg(2+) as cofactor.

It catalyses the reaction (2R)-2,3-dihydroxy-3-methylbutanoate + NADP(+) = (2S)-2-acetolactate + NADPH + H(+). The enzyme catalyses (2R,3R)-2,3-dihydroxy-3-methylpentanoate + NADP(+) = (S)-2-ethyl-2-hydroxy-3-oxobutanoate + NADPH + H(+). Its pathway is amino-acid biosynthesis; L-isoleucine biosynthesis; L-isoleucine from 2-oxobutanoate: step 2/4. It functions in the pathway amino-acid biosynthesis; L-valine biosynthesis; L-valine from pyruvate: step 2/4. In terms of biological role, involved in the biosynthesis of branched-chain amino acids (BCAA). Catalyzes an alkyl-migration followed by a ketol-acid reduction of (S)-2-acetolactate (S2AL) to yield (R)-2,3-dihydroxy-isovalerate. In the isomerase reaction, S2AL is rearranged via a Mg-dependent methyl migration to produce 3-hydroxy-3-methyl-2-ketobutyrate (HMKB). In the reductase reaction, this 2-ketoacid undergoes a metal-dependent reduction by NADPH to yield (R)-2,3-dihydroxy-isovalerate. This is Ketol-acid reductoisomerase (NADP(+)) from Pelodictyon phaeoclathratiforme (strain DSM 5477 / BU-1).